We begin with the raw amino-acid sequence, 194 residues long: MTIKLIVGLANPGAEYAATRHNAGAWFVDLLAERLRAPLREEAKFFGYTSRVTLGGEDVRLLVPTTFMNLSGKAVAAMASFFRINPDEILVAHDELDLPLGVAKFKLGGGHGGHNGLKDIISKLGNNPNFHRLRIGIGHPGDKNKVVGFVLGKPPVSEQKLIDEAIDEAARCTEMWFTDGLTKATNRLHAFKAQ.

Residue Tyr16 participates in tRNA binding. His21 serves as the catalytic Proton acceptor. TRNA contacts are provided by Phe67, Asn69, and Asn115.

It belongs to the PTH family. As to quaternary structure, monomer.

It localises to the cytoplasm. The catalysed reaction is an N-acyl-L-alpha-aminoacyl-tRNA + H2O = an N-acyl-L-amino acid + a tRNA + H(+). In terms of biological role, hydrolyzes ribosome-free peptidyl-tRNAs (with 1 or more amino acids incorporated), which drop off the ribosome during protein synthesis, or as a result of ribosome stalling. Its function is as follows. Catalyzes the release of premature peptidyl moieties from peptidyl-tRNA molecules trapped in stalled 50S ribosomal subunits, and thus maintains levels of free tRNAs and 50S ribosomes. This is Peptidyl-tRNA hydrolase from Escherichia coli O17:K52:H18 (strain UMN026 / ExPEC).